The following is a 270-amino-acid chain: tRNA pseudouridine synthase A (270 aa).

Aspartate 51 (nucleophile) is an active-site residue. A substrate-binding site is contributed by tyrosine 109.

Belongs to the tRNA pseudouridine synthase TruA family. In terms of assembly, homodimer.

It catalyses the reaction uridine(38/39/40) in tRNA = pseudouridine(38/39/40) in tRNA. Formation of pseudouridine at positions 38, 39 and 40 in the anticodon stem and loop of transfer RNAs. The polypeptide is tRNA pseudouridine synthase A (Burkholderia ambifaria (strain ATCC BAA-244 / DSM 16087 / CCUG 44356 / LMG 19182 / AMMD) (Burkholderia cepacia (strain AMMD))).